The primary structure comprises 433 residues: ATP-dependent protease ATPase subunit HslU (433 aa).

ATP is bound by residues isoleucine 18, 60–65 (GVGKTE), aspartate 246, glutamate 311, and arginine 383.

It belongs to the ClpX chaperone family. HslU subfamily. In terms of assembly, a double ring-shaped homohexamer of HslV is capped on each side by a ring-shaped HslU homohexamer. The assembly of the HslU/HslV complex is dependent on binding of ATP.

It localises to the cytoplasm. ATPase subunit of a proteasome-like degradation complex; this subunit has chaperone activity. The binding of ATP and its subsequent hydrolysis by HslU are essential for unfolding of protein substrates subsequently hydrolyzed by HslV. HslU recognizes the N-terminal part of its protein substrates and unfolds these before they are guided to HslV for hydrolysis. The protein is ATP-dependent protease ATPase subunit HslU of Cereibacter sphaeroides (strain KD131 / KCTC 12085) (Rhodobacter sphaeroides).